The following is a 179-amino-acid chain: Large ribosomal subunit protein uL5 (179 aa).

It belongs to the universal ribosomal protein uL5 family. As to quaternary structure, part of the 50S ribosomal subunit; part of the 5S rRNA/L5/L18/L25 subcomplex. Contacts the 5S rRNA and the P site tRNA. Forms a bridge to the 30S subunit in the 70S ribosome.

Its function is as follows. This is one of the proteins that bind and probably mediate the attachment of the 5S RNA into the large ribosomal subunit, where it forms part of the central protuberance. In the 70S ribosome it contacts protein S13 of the 30S subunit (bridge B1b), connecting the 2 subunits; this bridge is implicated in subunit movement. Contacts the P site tRNA; the 5S rRNA and some of its associated proteins might help stabilize positioning of ribosome-bound tRNAs. This Shouchella clausii (strain KSM-K16) (Alkalihalobacillus clausii) protein is Large ribosomal subunit protein uL5.